Reading from the N-terminus, the 236-residue chain is MKAAIIGAMEEEVAILRSRMEEREEVVIAGCEFSTGRLDGVEAVLLKSGIGKVNAAMGTTLLLDRFRPDFVINTGSAGGFLPSLRVGDLVISDEVVHHDVDVTAFGYAYGQVPGLPARYRADEALVEAAKQAAAQLDGLQAAIGLIATGDSFMNDPKRVEFVRGQFPELCAVEMEAAAIAQVCVQFGTPFVIIRALSDIAGEESNVSFEQFLETAAKHSAELVLSMLTVVQSKAKQ.

The Proton acceptor role is filled by Glu12. Residues Gly78, Met153, and 174–175 (ME) contribute to the substrate site. Asp198 (proton donor) is an active-site residue.

Belongs to the PNP/UDP phosphorylase family. MtnN subfamily.

It catalyses the reaction S-adenosyl-L-homocysteine + H2O = S-(5-deoxy-D-ribos-5-yl)-L-homocysteine + adenine. The catalysed reaction is S-methyl-5'-thioadenosine + H2O = 5-(methylsulfanyl)-D-ribose + adenine. The enzyme catalyses 5'-deoxyadenosine + H2O = 5-deoxy-D-ribose + adenine. It participates in amino-acid biosynthesis; L-methionine biosynthesis via salvage pathway; S-methyl-5-thio-alpha-D-ribose 1-phosphate from S-methyl-5'-thioadenosine (hydrolase route): step 1/2. Catalyzes the irreversible cleavage of the glycosidic bond in both 5'-methylthioadenosine (MTA) and S-adenosylhomocysteine (SAH/AdoHcy) to adenine and the corresponding thioribose, 5'-methylthioribose and S-ribosylhomocysteine, respectively. Also cleaves 5'-deoxyadenosine, a toxic by-product of radical S-adenosylmethionine (SAM) enzymes, into 5-deoxyribose and adenine. The polypeptide is 5'-methylthioadenosine/S-adenosylhomocysteine nucleosidase (Geobacillus thermodenitrificans (strain NG80-2)).